The chain runs to 178 residues: ATP-dependent protease subunit HslV (178 aa).

The active site involves T7. G162, C165, and T168 together coordinate Na(+).

This sequence belongs to the peptidase T1B family. HslV subfamily. In terms of assembly, a double ring-shaped homohexamer of HslV is capped on each side by a ring-shaped HslU homohexamer. The assembly of the HslU/HslV complex is dependent on binding of ATP.

Its subcellular location is the cytoplasm. The catalysed reaction is ATP-dependent cleavage of peptide bonds with broad specificity.. Its activity is regulated as follows. Allosterically activated by HslU binding. Protease subunit of a proteasome-like degradation complex believed to be a general protein degrading machinery. This chain is ATP-dependent protease subunit HslV, found in Burkholderia vietnamiensis (strain G4 / LMG 22486) (Burkholderia cepacia (strain R1808)).